The following is a 139-amino-acid chain: D-ribose pyranase (139 aa).

His-20 acts as the Proton donor in catalysis. Substrate contacts are provided by residues Asp-28, His-106, and 128–130 (YAN).

It belongs to the RbsD / FucU family. RbsD subfamily. As to quaternary structure, homodecamer.

It localises to the cytoplasm. It carries out the reaction beta-D-ribopyranose = beta-D-ribofuranose. It participates in carbohydrate metabolism; D-ribose degradation; D-ribose 5-phosphate from beta-D-ribopyranose: step 1/2. Its function is as follows. Catalyzes the interconversion of beta-pyran and beta-furan forms of D-ribose. The polypeptide is D-ribose pyranase (Vibrio parahaemolyticus serotype O3:K6 (strain RIMD 2210633)).